A 367-amino-acid chain; its full sequence is NADH-ubiquinone oxidoreductase chain 1 (367 aa).

Helical transmembrane passes span 5–25, 43–63, 74–94, 108–128, 152–172, 179–199, 225–245, 265–285, 301–321, and 336–356; these read IIIS…GIAY, PNFV…KLLL, IILF…GYAV, LGIY…LLAG, LVLS…NLSV, AIWN…GSVA, AVVF…MCIL, FFYS…NIFY, LIYG…FIWV, and FCWT…PCIL.

This sequence belongs to the complex I subunit 1 family.

The protein resides in the mitochondrion inner membrane. The catalysed reaction is a ubiquinone + NADH + 5 H(+)(in) = a ubiquinol + NAD(+) + 4 H(+)(out). Core subunit of the mitochondrial membrane respiratory chain NADH dehydrogenase (Complex I) that is believed to belong to the minimal assembly required for catalysis. Complex I functions in the transfer of electrons from NADH to the respiratory chain. The immediate electron acceptor for the enzyme is believed to be ubiquinone. The chain is NADH-ubiquinone oxidoreductase chain 1 (ND1) from Podospora anserina (strain S / ATCC MYA-4624 / DSM 980 / FGSC 10383) (Pleurage anserina).